The sequence spans 156 residues: MGLPPIECPFDIPKPFRHPDLFDKFSNCDPLPIFFLNRWNESFKVFYQNLDDEHRGLFDVVFDVDAKRGDAGAVSKAASAFKGHFTTEEAEMKKGVDAGKLDGAHYKGHCTAHNKFLELFGSFGNNLGDDEINYSMKWLVNHIKSTDFHYKGKLIQ.

Residues H54, H84, E88, H109, H113, H142, and D147 each contribute to the Fe cation site.

This sequence belongs to the hemerythrin family.

Functionally, oxygen-binding protein. The oxygen-binding site contains two iron atoms. This chain is Hemerythrin-like protein, found in Nematostella vectensis (Starlet sea anemone).